Reading from the N-terminus, the 424-residue chain is Serine--tRNA ligase (424 aa).

Residue 233-235 (TAE) coordinates L-serine. 264 to 266 (RRE) contacts ATP. Glutamate 287 provides a ligand contact to L-serine. Residue 351-354 (EISS) participates in ATP binding. Residue serine 387 coordinates L-serine.

It belongs to the class-II aminoacyl-tRNA synthetase family. Type-1 seryl-tRNA synthetase subfamily. As to quaternary structure, homodimer. The tRNA molecule binds across the dimer.

The protein resides in the cytoplasm. The catalysed reaction is tRNA(Ser) + L-serine + ATP = L-seryl-tRNA(Ser) + AMP + diphosphate + H(+). The enzyme catalyses tRNA(Sec) + L-serine + ATP = L-seryl-tRNA(Sec) + AMP + diphosphate + H(+). The protein operates within aminoacyl-tRNA biosynthesis; selenocysteinyl-tRNA(Sec) biosynthesis; L-seryl-tRNA(Sec) from L-serine and tRNA(Sec): step 1/1. In terms of biological role, catalyzes the attachment of serine to tRNA(Ser). Is also able to aminoacylate tRNA(Sec) with serine, to form the misacylated tRNA L-seryl-tRNA(Sec), which will be further converted into selenocysteinyl-tRNA(Sec). In Cyanothece sp. (strain PCC 7425 / ATCC 29141), this protein is Serine--tRNA ligase.